The following is a 991-amino-acid chain: UvrABC system protein A (991 aa).

48–55 (GLSGSGKS) lines the ATP pocket. 2 consecutive ABC transporter domains span residues 345 to 624 (WAKS…PKSL) and 644 to 972 (NHRR…KFLE). 676 to 683 (GVSGGGKS) is a binding site for ATP. The C4-type zinc finger occupies 775-801 (CEACQGDGVIKIEMHFLPDVYVTCDVC).

The protein belongs to the ABC transporter superfamily. UvrA family. In terms of assembly, forms a heterotetramer with UvrB during the search for lesions.

The protein localises to the cytoplasm. In terms of biological role, the UvrABC repair system catalyzes the recognition and processing of DNA lesions. UvrA is an ATPase and a DNA-binding protein. A damage recognition complex composed of 2 UvrA and 2 UvrB subunits scans DNA for abnormalities. When the presence of a lesion has been verified by UvrB, the UvrA molecules dissociate. This is UvrABC system protein A from Bradyrhizobium diazoefficiens (strain JCM 10833 / BCRC 13528 / IAM 13628 / NBRC 14792 / USDA 110).